The following is a 151-amino-acid chain: Large ribosomal subunit protein eL8 (151 aa).

Belongs to the eukaryotic ribosomal protein eL8 family. In terms of assembly, part of the 50S ribosomal subunit. Probably part of the RNase P complex.

It is found in the cytoplasm. Functionally, multifunctional RNA-binding protein that recognizes the K-turn motif in ribosomal RNA, the RNA component of RNase P, box H/ACA, box C/D and box C'/D' sRNAs. This chain is Large ribosomal subunit protein eL8, found in Pyrobaculum aerophilum (strain ATCC 51768 / DSM 7523 / JCM 9630 / CIP 104966 / NBRC 100827 / IM2).